Consider the following 278-residue polypeptide: tRNA (guanine-N(7)-)-methyltransferase (278 aa).

Residues glycine 63, glutamate 86–leucine 87, asparagine 119–alanine 120, and leucine 139 each bind S-adenosyl-L-methionine. Aspartate 142 is an active-site residue. Threonine 217–glutamate 219 contributes to the S-adenosyl-L-methionine binding site. Residues isoleucine 259–lysine 278 are disordered. Low complexity predominate over residues serine 261 to lysine 278.

The protein belongs to the class I-like SAM-binding methyltransferase superfamily. TrmB family.

Its subcellular location is the nucleus. The enzyme catalyses guanosine(46) in tRNA + S-adenosyl-L-methionine = N(7)-methylguanosine(46) in tRNA + S-adenosyl-L-homocysteine. It functions in the pathway tRNA modification; N(7)-methylguanine-tRNA biosynthesis. In terms of biological role, catalyzes the formation of N(7)-methylguanine at position 46 (m7G46) in tRNA. The polypeptide is tRNA (guanine-N(7)-)-methyltransferase (mettl1) (Dictyostelium discoideum (Social amoeba)).